We begin with the raw amino-acid sequence, 586 residues long: Ferredoxin--nitrite reductase, chloroplastic (586 aa).

Residues M1–T18 show a composition bias toward low complexity. A disordered region spans residues M1 to P20. Residues M1–L25 constitute a chloroplast transit peptide. K103 participates in a covalent cross-link: Glycyl lysine isopeptide (Lys-Gly) (interchain with G-Cter in ubiquitin). Residues C464, C470, C505, and C509 each contribute to the [4Fe-4S] cluster site. C509 serves as a coordination point for siroheme.

This sequence belongs to the nitrite and sulfite reductase 4Fe-4S domain family. Monomer. The cofactor is siroheme. Requires [4Fe-4S] cluster as cofactor.

It localises to the plastid. It is found in the chloroplast. The enzyme catalyses 6 oxidized [2Fe-2S]-[ferredoxin] + NH4(+) + 2 H2O = nitrite + 6 reduced [2Fe-2S]-[ferredoxin] + 8 H(+). It participates in nitrogen metabolism; nitrate reduction (assimilation). Its function is as follows. Catalyzes the six-electron reduction of nitrite to ammonium. This chain is Ferredoxin--nitrite reductase, chloroplastic (NIR1), found in Arabidopsis thaliana (Mouse-ear cress).